Reading from the N-terminus, the 412-residue chain is Protein png-1 (412 aa).

Residues Cys150, Cys153, Cys182, and Cys185 each contribute to the Zn(2+) site. The disordered stretch occupies residues 363 to 412 (AAAARGGRSSPDNKSGANMMGSPATGDIKRPIPEDAPVPDVPSLWPTYGP).

It belongs to the transglutaminase-like superfamily. PNGase family.

The chain is Protein png-1 (un-7) from Neurospora crassa (strain ATCC 24698 / 74-OR23-1A / CBS 708.71 / DSM 1257 / FGSC 987).